The primary structure comprises 108 residues: Peptidyl-prolyl cis-trans isomerase FKBP1A (108 aa).

The residue at position 10 (Ser-10) is a Phosphoserine. The 89-residue stretch at 20–108 folds into the PPIase FKBP-type domain; sequence GQTCVVHYTG…VFDVELLKLE (89 aa). Lys-53 is subject to N6-acetyllysine; alternate. Lys-53 is subject to N6-succinyllysine; alternate.

It belongs to the FKBP-type PPIase family. FKBP1 subfamily. In terms of assembly, interacts with TGFBR1; prevents TGFBR1 phosphorylation by TGFBR2 and stabilizes it in the inactive conformation. Interacts with ACVR1B and SMAD7. Identified in a complex composed of RYR1, PDE4D, PKA, FKBP1A and protein phosphatase 1 (PP1). Interacts directly with RYR2. Interacts directly with RYR3. Interacts directly with RYR1. Interacts with GLMN; rapamycin and FK506 abolish the interaction with GLMN in a dose dependent manner. As to expression, ubiquitous.

The protein localises to the cytoplasm. It is found in the cytosol. It localises to the sarcoplasmic reticulum membrane. It carries out the reaction [protein]-peptidylproline (omega=180) = [protein]-peptidylproline (omega=0). With respect to regulation, inhibited by both FK506 and rapamycin. Its function is as follows. Keeps in an inactive conformation TGFBR1, the TGF-beta type I serine/threonine kinase receptor, preventing TGF-beta receptor activation in absence of ligand. Recruits SMAD7 to ACVR1B which prevents the association of SMAD2 and SMAD3 with the activin receptor complex, thereby blocking the activin signal. May modulate the RYR1 calcium channel activity. PPIases accelerate the folding of proteins. It catalyzes the cis-trans isomerization of proline imidic peptide bonds in oligopeptides. This chain is Peptidyl-prolyl cis-trans isomerase FKBP1A (Fkbp1a), found in Rattus norvegicus (Rat).